Here is a 616-residue protein sequence, read N- to C-terminus: Pyrophosphate--fructose 6-phosphate 1-phosphotransferase subunit alpha (616 aa).

Belongs to the phosphofructokinase type A (PFKA) family. PPi-dependent PFK group II subfamily. Clade 'Long' sub-subfamily. Tetramer of two alpha (regulatory) and two beta (catalytic) chains.

The protein localises to the cytoplasm. It functions in the pathway carbohydrate degradation; glycolysis; D-glyceraldehyde 3-phosphate and glycerone phosphate from D-glucose: step 3/4. Allosterically activated by fructose 2,6-bisphosphate. Regulatory subunit of pyrophosphate--fructose 6-phosphate 1-phosphotransferase. The polypeptide is Pyrophosphate--fructose 6-phosphate 1-phosphotransferase subunit alpha (Solanum tuberosum (Potato)).